We begin with the raw amino-acid sequence, 62 residues long: Ponericin-W-like 32.2 (62 aa).

The N-terminal stretch at 1–23 (MKCKKQLLVIFFAYFLVVNESEA) is a signal peptide. Residues 49–62 (RALMKRDLEDIMDP) constitute a propeptide that is removed on maturation.

This sequence belongs to the non-disulfide-bridged peptide (NDBP) superfamily. Medium-length antimicrobial peptide (group 3) family. Ponericin-W subfamily. In terms of tissue distribution, expressed by the venom gland.

Its subcellular location is the secreted. The protein localises to the target cell membrane. Its function is as follows. Antimicrobial peptide with potent activity against a range of Gram-positive and Gram-negative bacteria. Has high hemolytic activity against erythrocytes. May act by disrupting the integrity of the bacterial cell membrane. The sequence is that of Ponericin-W-like 32.2 from Lychas mucronatus (Chinese swimming scorpion).